Consider the following 74-residue polypeptide: NAD(P)H-quinone oxidoreductase subunit L (74 aa).

A run of 2 helical transmembrane segments spans residues 5–25 (LIIAALYLALAGAYLLVVPAA) and 43–63 (AFMYFLVFFFFPGLLLLAPLL).

Belongs to the complex I NdhL subunit family. As to quaternary structure, NDH-1 can be composed of about 15 different subunits; different subcomplexes with different compositions have been identified which probably have different functions.

Its subcellular location is the cellular thylakoid membrane. It carries out the reaction a plastoquinone + NADH + (n+1) H(+)(in) = a plastoquinol + NAD(+) + n H(+)(out). The enzyme catalyses a plastoquinone + NADPH + (n+1) H(+)(in) = a plastoquinol + NADP(+) + n H(+)(out). Functionally, NDH-1 shuttles electrons from an unknown electron donor, via FMN and iron-sulfur (Fe-S) centers, to quinones in the respiratory and/or the photosynthetic chain. The immediate electron acceptor for the enzyme in this species is believed to be plastoquinone. Couples the redox reaction to proton translocation, and thus conserves the redox energy in a proton gradient. Cyanobacterial NDH-1 also plays a role in inorganic carbon-concentration. This Synechococcus elongatus (strain ATCC 33912 / PCC 7942 / FACHB-805) (Anacystis nidulans R2) protein is NAD(P)H-quinone oxidoreductase subunit L.